A 260-amino-acid chain; its full sequence is Triosephosphate isomerase (260 aa).

11–13 (NWK) contacts substrate. Histidine 103 serves as the catalytic Electrophile. Catalysis depends on glutamate 175, which acts as the Proton acceptor. Substrate-binding positions include glycine 181, serine 220, and 241–242 (GG).

The protein belongs to the triosephosphate isomerase family. Homodimer.

It is found in the cytoplasm. It catalyses the reaction D-glyceraldehyde 3-phosphate = dihydroxyacetone phosphate. Its pathway is carbohydrate biosynthesis; gluconeogenesis. It participates in carbohydrate degradation; glycolysis; D-glyceraldehyde 3-phosphate from glycerone phosphate: step 1/1. Its function is as follows. Involved in the gluconeogenesis. Catalyzes stereospecifically the conversion of dihydroxyacetone phosphate (DHAP) to D-glyceraldehyde-3-phosphate (G3P). This is Triosephosphate isomerase from Shewanella amazonensis (strain ATCC BAA-1098 / SB2B).